The following is a 435-amino-acid chain: NADH-quinone oxidoreductase subunit D 2 (435 aa).

It belongs to the complex I 49 kDa subunit family. NDH-1 is composed of 14 different subunits. Subunits NuoB, C, D, E, F, and G constitute the peripheral sector of the complex.

It localises to the cell inner membrane. The catalysed reaction is a quinone + NADH + 5 H(+)(in) = a quinol + NAD(+) + 4 H(+)(out). NDH-1 shuttles electrons from NADH, via FMN and iron-sulfur (Fe-S) centers, to quinones in the respiratory chain. The immediate electron acceptor for the enzyme in this species is believed to be ubiquinone. Couples the redox reaction to proton translocation (for every two electrons transferred, four hydrogen ions are translocated across the cytoplasmic membrane), and thus conserves the redox energy in a proton gradient. The protein is NADH-quinone oxidoreductase subunit D 2 of Stenotrophomonas maltophilia (strain R551-3).